Here is a 399-residue protein sequence, read N- to C-terminus: Chorismate synthase (399 aa).

NADP(+)-binding residues include R40 and R46. Residues 135 to 137 (RAS), 256 to 257 (QA), G301, 316 to 320 (KPIAT), and R342 each bind FMN.

The protein belongs to the chorismate synthase family. As to quaternary structure, homotetramer. It depends on FMNH2 as a cofactor.

It catalyses the reaction 5-O-(1-carboxyvinyl)-3-phosphoshikimate = chorismate + phosphate. Its pathway is metabolic intermediate biosynthesis; chorismate biosynthesis; chorismate from D-erythrose 4-phosphate and phosphoenolpyruvate: step 7/7. Its function is as follows. Catalyzes the anti-1,4-elimination of the C-3 phosphate and the C-6 proR hydrogen from 5-enolpyruvylshikimate-3-phosphate (EPSP) to yield chorismate, which is the branch point compound that serves as the starting substrate for the three terminal pathways of aromatic amino acid biosynthesis. This reaction introduces a second double bond into the aromatic ring system. The polypeptide is Chorismate synthase (Paenarthrobacter aurescens (strain TC1)).